The primary structure comprises 166 residues: Endoribonuclease YbeY (166 aa).

His111, His115, and His121 together coordinate Zn(2+). The interval 141–166 is disordered; sequence LGYPDPYADDESADHPHSDTPSKDHE. Residues 153-166 show a composition bias toward basic and acidic residues; sequence ADHPHSDTPSKDHE.

It belongs to the endoribonuclease YbeY family. The cofactor is Zn(2+).

The protein resides in the cytoplasm. In terms of biological role, single strand-specific metallo-endoribonuclease involved in late-stage 70S ribosome quality control and in maturation of the 3' terminus of the 16S rRNA. The polypeptide is Endoribonuclease YbeY (Pseudomonas syringae pv. tomato (strain ATCC BAA-871 / DC3000)).